A 263-amino-acid chain; its full sequence is MQEILNIAAYKFVAIDDSPVLREDLRERAQALGLMGTILLAPEGINLFLAGLPDAVRSFVAGLRADVRFADLETKESWSAAQPFRRMLVKLKREIIRMDHPAIQPAAGRAPGVDAPTLKRWLDQGHDDEGREIALLDTRNDFEVDEGSFDGAIDWRITKFTEFPPALKAHRADFAGKTVVSFCTGGIRCEKAAILMREEGIENVLQLEGGILKYFEEVGGAHYHGDCFVFDGRRALAPDLSARAADASARAAEDVGLSSGLKK.

Residues 129-223 form the Rhodanese domain; sequence EGREIALLDT…YFEEVGGAHY (95 aa). Cysteine 183 (cysteine persulfide intermediate) is an active-site residue.

This sequence belongs to the TrhO family.

It catalyses the reaction uridine(34) in tRNA + AH2 + O2 = 5-hydroxyuridine(34) in tRNA + A + H2O. Functionally, catalyzes oxygen-dependent 5-hydroxyuridine (ho5U) modification at position 34 in tRNAs. This Variovorax paradoxus (strain S110) protein is tRNA uridine(34) hydroxylase.